The primary structure comprises 907 residues: Putative ATP-dependent DNA helicase DDX11-like protein 8 (907 aa).

Residues 9–447 (GAIHFPFPFT…KNLMYLKQIL (439 aa)) enclose the Helicase ATP-binding domain. Residue 44-51 (SPTGTGKS) participates in ATP binding. The disordered stretch occupies residues 202-222 (YESDEEKKVASGHRVDEDEDD). The segment covering 206-217 (EEKKVASGHRVD) has biased composition (basic and acidic residues). Ser-264 is subject to Phosphoserine. Positions 269 and 287 each coordinate [4Fe-4S] cluster. Residues 291-306 (QRSRHEKKKGAEEEKP) show a composition bias toward basic and acidic residues. The segment at 291 to 314 (QRSRHEKKKGAEEEKPKRRRQEKQ) is disordered. Positions 317 and 352 each coordinate [4Fe-4S] cluster. The short motif at 395–398 (DEAH) is the DEAH element.

This sequence belongs to the DEAD box helicase family. DEAH subfamily. DDX11/CHL1 sub-subfamily. It depends on [4Fe-4S] cluster as a cofactor.

The protein localises to the nucleus. The protein resides in the nucleolus. In terms of biological role, putative DNA helicase. In Homo sapiens (Human), this protein is Putative ATP-dependent DNA helicase DDX11-like protein 8 (DDX11L8).